A 130-amino-acid polypeptide reads, in one-letter code: Small ribosomal subunit protein uS9 (130 aa).

Over residues 99 to 110 (KKAGFLTRDPRM) the composition is skewed to basic and acidic residues. Residues 99 to 130 (KKAGFLTRDPRMKERKKYGLKKARRAPQFSKR) form a disordered region. Over residues 111 to 130 (KERKKYGLKKARRAPQFSKR) the composition is skewed to basic residues.

Belongs to the universal ribosomal protein uS9 family.

This is Small ribosomal subunit protein uS9 from Clostridium botulinum (strain Eklund 17B / Type B).